Reading from the N-terminus, the 154-residue chain is Prefoldin subunit 2 (154 aa).

Disordered stretches follow at residues 1–20 and 126–154; these read MADS…GKGA and LMGE…VLVS. Positions 9 to 18 are enriched in gly residues; it reads GKSGGSGAGK. A compositionally biased stretch (basic and acidic residues) spans 126–139; it reads LMGEDEKPAAKENS. Residues 140–154 are compositionally biased toward low complexity; sequence EGAGAKASSAGVLVS.

Belongs to the prefoldin subunit beta family. Heterohexamer of two PFD-alpha type and four PFD-beta type subunits. Component of the PAQosome complex which is responsible for the biogenesis of several protein complexes and which consists of R2TP complex members RUVBL1, RUVBL2, RPAP3 and PIH1D1, URI complex members PFDN2, PFDN6, PDRG1, UXT and URI1 as well as ASDURF, POLR2E and DNAAF10/WDR92. Interacts with URI1; the interaction is phosphorylation-dependent and occurs in a growth-dependent manner.

It localises to the nucleus. It is found in the cytoplasm. The protein resides in the mitochondrion. Its function is as follows. Binds specifically to cytosolic chaperonin (c-CPN) and transfers target proteins to it. Binds to nascent polypeptide chain and promotes folding in an environment in which there are many competing pathways for nonnative proteins. This is Prefoldin subunit 2 (Pfdn2) from Mus musculus (Mouse).